We begin with the raw amino-acid sequence, 323 residues long: Acetyl-coenzyme A carboxylase carboxyl transferase subunit alpha (323 aa).

Residues 36–293 form the CoA carboxyltransferase C-terminal domain; it reads ELELLSAKAQ…KEEVVKNLQI (258 aa).

It belongs to the AccA family. In terms of assembly, acetyl-CoA carboxylase is a heterohexamer composed of biotin carboxyl carrier protein (AccB), biotin carboxylase (AccC) and two subunits each of ACCase subunit alpha (AccA) and ACCase subunit beta (AccD).

It localises to the cytoplasm. The enzyme catalyses N(6)-carboxybiotinyl-L-lysyl-[protein] + acetyl-CoA = N(6)-biotinyl-L-lysyl-[protein] + malonyl-CoA. The protein operates within lipid metabolism; malonyl-CoA biosynthesis; malonyl-CoA from acetyl-CoA: step 1/1. In terms of biological role, component of the acetyl coenzyme A carboxylase (ACC) complex. First, biotin carboxylase catalyzes the carboxylation of biotin on its carrier protein (BCCP) and then the CO(2) group is transferred by the carboxyltransferase to acetyl-CoA to form malonyl-CoA. This is Acetyl-coenzyme A carboxylase carboxyl transferase subunit alpha from Carboxydothermus hydrogenoformans (strain ATCC BAA-161 / DSM 6008 / Z-2901).